A 75-amino-acid polypeptide reads, in one-letter code: Small ribosomal subunit protein bS21 (75 aa).

It belongs to the bacterial ribosomal protein bS21 family.

This chain is Small ribosomal subunit protein bS21, found in Brucella abortus (strain S19).